The primary structure comprises 66 residues: Large ribosomal subunit protein uL29c (66 aa).

Belongs to the universal ribosomal protein uL29 family.

Its subcellular location is the plastid. It localises to the chloroplast. The polypeptide is Large ribosomal subunit protein uL29c (Gracilaria tenuistipitata var. liui (Red alga)).